The sequence spans 720 residues: Polyribonucleotide nucleotidyltransferase (720 aa).

Residues Asp-487 and Asp-493 each coordinate Mg(2+). A KH domain is found at 554–613 (PRIETFKIPTDKIREVIGTGGKVIREIVEKTGAKINIEDDGTVKVASNDGEAMKAAIKWI). The region spanning 623 to 691 (GQIYEGTVVK…DRGKTRLSMK (69 aa)) is the S1 motif domain. The segment at 691–720 (KAVDQQTGEDLEAAGHKAEKADAPREAAGE) is disordered. Over residues 703–720 (AAGHKAEKADAPREAAGE) the composition is skewed to basic and acidic residues.

Belongs to the polyribonucleotide nucleotidyltransferase family. Mg(2+) is required as a cofactor.

Its subcellular location is the cytoplasm. It catalyses the reaction RNA(n+1) + phosphate = RNA(n) + a ribonucleoside 5'-diphosphate. Functionally, involved in mRNA degradation. Catalyzes the phosphorolysis of single-stranded polyribonucleotides processively in the 3'- to 5'-direction. The chain is Polyribonucleotide nucleotidyltransferase from Nitrobacter hamburgensis (strain DSM 10229 / NCIMB 13809 / X14).